We begin with the raw amino-acid sequence, 770 residues long: Probable zinc transporter protein DDB_G0291141 (770 aa).

The Cytoplasmic portion of the chain corresponds to 1 to 36 (MAGSLDDSIYNNGRSGGGGGGFKFSKGFNKDSISKR). A helical transmembrane segment spans residues 37 to 57 (IIMMLFFSKGIRAWSCIILLY). The Extracellular segment spans residues 58–62 (FLQSS). Residues 63 to 83 (ISIISASFYMCLFSAIFSVVV) form a helical membrane-spanning segment. Topologically, residues 84–100 (EKPWNLLSSLRPSQIKK) are cytoplasmic. Residues 101 to 117 (IIYHSIFNLLIIITWNS) form a helical membrane-spanning segment. Residues 118-123 (SIKFIG) are Extracellular-facing. Residues 124-146 (PIGSILASDYTFSTYPLIFNSLL) traverse the membrane as a helical segment. The Cytoplasmic segment spans residues 147-154 (QGNFLATD). The helical transmembrane segment at 155-175 (MSRGSIMLMIGYFLIPLFGIS) threads the bilayer. Residues 176–184 (NRLDILGYT) are Extracellular-facing. The chain crosses the membrane as a helical span at residues 185-205 (SSQVFMIGLFSLIVHNVLVLW). Topologically, residues 206–224 (KKTIVRSWNSGSSGGKNKL) are cytoplasmic. Residues 225 to 245 (SSLGSCVSTIILFVFKLFEGF) form a helical membrane-spanning segment. The Extracellular portion of the chain corresponds to 246 to 262 (SSGSSGSDSINQVSYSQ). Residues 263–283 (LFVIAIITFILYSLNQFIDDV) form a helical membrane-spanning segment. Residues 284-291 (SEKELTFN) are Cytoplasmic-facing. A helical membrane pass occupies residues 292-312 (VLSKVSLTSSVIFGLLAALFI). At 313-316 (GFKD) the chain is on the extracellular side. A helical transmembrane segment spans residues 317-337 (FFHPILILSFIFIINAIHILY). Topologically, residues 338 to 404 (SKSNDIQPMT…QIVDKPTSRR (67 aa)) are cytoplasmic. The chain crosses the membrane as a helical span at residues 405 to 425 (IFTFLVINLMFMFVEMAYGIW). Over 426–434 (TNSLGLITD) the chain is Extracellular. Residues 435–455 (ACHMFFDATALFIALVAEVIS) form a helical membrane-spanning segment. Topologically, residues 456–469 (QWKQNDKYSYGYGR) are cytoplasmic. A helical transmembrane segment spans residues 470-490 (FQVLSGFVNGIFLIFIAVTIL). Over 491 to 507 (MESVERLLEPPEINTDK) the chain is Extracellular. A helical membrane pass occupies residues 508–528 (LLLVSVLGFIINLIGIFSFHG). The Cytoplasmic segment spans residues 529–592 (DHGHSHGGGG…GVFLHLLADT (64 aa)). A disordered region spans residues 532–566 (HSHGGGGGHSHGGGEKKEKHHGHSHGGHGDHQQVT). The chain crosses the membrane as a helical span at residues 593-613 (LGSVGVIVSSLIIQIWGYTLA). Position 614 (D614) is a topological domain, extracellular. A helical transmembrane segment spans residues 615–635 (PICSLLISILIFLSVLPLIAN). Over 636 to 770 (TAKTLLQCTP…SSSSHHHRHN (135 aa)) the chain is Cytoplasmic. A disordered region spans residues 751 to 770 (DIHHNHSSSSSSSSHHHRHN).

It belongs to the cation diffusion facilitator (CDF) transporter (TC 2.A.4) family. SLC30A subfamily.

The protein localises to the membrane. Functionally, may be involved in zinc transport from the cytoplasm to either intracellular organelles or extracellular spaces. The chain is Probable zinc transporter protein DDB_G0291141 from Dictyostelium discoideum (Social amoeba).